The primary structure comprises 116 residues: MIYFGGIMAIAYAKLYEIIAKYIKDEKRAEELYNAVVEVIKEEKIIVKHELKDELKNELATKEDIMLAEERILRYVDNRFNQLDKKMTVGFVILILLYILTNPNAIELIKLLFGVK.

Residues Val-89–Ile-109 form a helical membrane-spanning segment.

Belongs to the M.jannaschii MJ0023/MJ0349/MJ1072/MJ1074/MJ1107/MJECL16 family.

The protein localises to the membrane. This is an uncharacterized protein from Methanocaldococcus jannaschii (strain ATCC 43067 / DSM 2661 / JAL-1 / JCM 10045 / NBRC 100440) (Methanococcus jannaschii).